Consider the following 338-residue polypeptide: MCRRESLRTLPWLFWVLLSCPRLLEYSSSSFPFATADIAEKMWAENYETTSPAPVLVAEGEQVTIPCTVMTHSWPMVSIRARFCRSHDGSDELILDAVKGHRLMNGLQYRLPYATWNFSQLHLGQIFSLTFNVSTDTAGMYECVLRNYSHGLIMQRFVILTQLETLSRPDEPCCTPALGRYSLGDQIWSPTPWRLRNHDCGMYRGFQRNYFYIGRADAEDCWKPACPDEEPDRCWTVIQRYRLPGDCYRSQPHPPKFLPVTPAPPADIDTGMSPWATRGIAAFLGFWSIFTVCFLCYLCYLQCCGHWCPTPGRGRRGGEGYRRLPTYDSYPGVKKMKR.

The signal sequence occupies residues 1 to 25 (MCRRESLRTLPWLFWVLLSCPRLLE). The Extracellular portion of the chain corresponds to 37 to 278 (DIAEKMWAEN…DTGMSPWATR (242 aa)). Asparagine 117, asparagine 132, and asparagine 147 each carry an N-linked (GlcNAc...) asparagine; by host glycan. A helical transmembrane segment spans residues 279 to 299 (GIAAFLGFWSIFTVCFLCYLC). Over 300–338 (YLQCCGHWCPTPGRGRRGGEGYRRLPTYDSYPGVKKMKR) the chain is Cytoplasmic.

As to quaternary structure, interacts with human PVR. Interacts with human TNFRSF10A and TNFRSF10B. Forms a homodimer that engages two TNFRSF10B monomers.

The protein localises to the host endoplasmic reticulum membrane. Functionally, evasion of NK cell killing. Blocks surface expression of PVR which is a ligand for NK cell-activating receptors. Binds human PVR in the endoplasmic reticulum and prevents its maturation and transport to the cell surface. Targets also the natural killer cell activating ligand NECTIN2 for proteasome-mediated degradation. Additionally promotes intracellular retention of TNFRSF10A/TRAIL-R1 and TNFRSF10B/TRAIL-R2 and thus down-regulates their cell surface expression. The polypeptide is Protein UL141 (UL141) (Human cytomegalovirus (strain Merlin) (HHV-5)).